The primary structure comprises 461 residues: Photosynthetic NDH subunit of subcomplex B 1, chloroplastic (461 aa).

The N-terminal 44 residues, 1–44 (MASSLPLLPKPISPFFKTPPFSTSKPLVFLNFQTRLTSRSSDVS), are a transit peptide targeting the chloroplast. A disordered region spans residues 66–90 (NEYGSLFADGKQDEDPRPPDNPDNP). The segment covering 75 to 85 (GKQDEDPRPPD) has biased composition (basic and acidic residues).

In terms of assembly, part of the chloroplast NDH complex, composed of a mixture of chloroplast and nucleus encoded subunits. Component of the NDH subcomplex B, at least composed of PnsB1, PnsB2, PnsB3, PnsB4 and PnsB5.

Its subcellular location is the plastid. The protein resides in the chloroplast thylakoid membrane. In terms of biological role, NDH shuttles electrons from NAD(P)H:plastoquinone, via FMN and iron-sulfur (Fe-S) centers, to quinones in the photosynthetic chain and possibly in a chloroplast respiratory chain. The immediate electron acceptor for the enzyme in this species is believed to be plastoquinone. Couples the redox reaction to proton translocation, and thus conserves the redox energy in a proton gradient. The polypeptide is Photosynthetic NDH subunit of subcomplex B 1, chloroplastic (Arabidopsis thaliana (Mouse-ear cress)).